The chain runs to 100 residues: Putative antiporter subunit mnhF2 (100 aa).

Helical transmembrane passes span 5–25, 38–60, and 70–92; these read ITHIMIISSLIIFGIALIICL, VVTFDTTSAVVMSIVGVLSVLMG, and LIAIISFVSSVSISRFIGGGHVF.

This sequence belongs to the CPA3 antiporters (TC 2.A.63) subunit F family. As to quaternary structure, may form a heterooligomeric complex that consists of seven subunits: mnhA2, mnhB2, mnhC2, mnhD2, mnhE2, mnhF2 and mnhG2.

Its subcellular location is the cell membrane. The protein is Putative antiporter subunit mnhF2 (mnhF2) of Staphylococcus aureus (strain USA300).